A 379-amino-acid polypeptide reads, in one-letter code: Glucose-1-phosphate adenylyltransferase (379 aa).

Residues G164, 179-180 (EK), and S190 each bind alpha-D-glucose 1-phosphate.

Belongs to the bacterial/plant glucose-1-phosphate adenylyltransferase family. As to quaternary structure, homotetramer.

The catalysed reaction is alpha-D-glucose 1-phosphate + ATP + H(+) = ADP-alpha-D-glucose + diphosphate. The protein operates within glycan biosynthesis; glycogen biosynthesis. Functionally, involved in the biosynthesis of ADP-glucose, a building block required for the elongation reactions to produce glycogen. Catalyzes the reaction between ATP and alpha-D-glucose 1-phosphate (G1P) to produce pyrophosphate and ADP-Glc. The protein is Glucose-1-phosphate adenylyltransferase of Streptococcus agalactiae serotype Ia (strain ATCC 27591 / A909 / CDC SS700).